We begin with the raw amino-acid sequence, 117 residues long: Large ribosomal subunit protein bL20 (117 aa).

The protein belongs to the bacterial ribosomal protein bL20 family.

Functionally, binds directly to 23S ribosomal RNA and is necessary for the in vitro assembly process of the 50S ribosomal subunit. It is not involved in the protein synthesizing functions of that subunit. The chain is Large ribosomal subunit protein bL20 from Pelobacter propionicus (strain DSM 2379 / NBRC 103807 / OttBd1).